A 170-amino-acid polypeptide reads, in one-letter code: Phosphopantetheine adenylyltransferase (170 aa).

T9 is a binding site for substrate. Residues 9 to 10 (TF) and H17 each bind ATP. Substrate contacts are provided by K41, L73, and R87. ATP-binding positions include 88–90 (GLR), E98, and 123–129 (YQFISGT).

Belongs to the bacterial CoaD family. Homohexamer. Requires Mg(2+) as cofactor.

Its subcellular location is the cytoplasm. It catalyses the reaction (R)-4'-phosphopantetheine + ATP + H(+) = 3'-dephospho-CoA + diphosphate. It functions in the pathway cofactor biosynthesis; coenzyme A biosynthesis; CoA from (R)-pantothenate: step 4/5. Reversibly transfers an adenylyl group from ATP to 4'-phosphopantetheine, yielding dephospho-CoA (dPCoA) and pyrophosphate. This Bordetella petrii (strain ATCC BAA-461 / DSM 12804 / CCUG 43448) protein is Phosphopantetheine adenylyltransferase.